An 818-amino-acid polypeptide reads, in one-letter code: Glycerol-3-phosphate acyltransferase (818 aa).

Residues 305–310 carry the HXXXXD motif motif; it reads HRSHMD.

It belongs to the GPAT/DAPAT family.

Its subcellular location is the cell inner membrane. The catalysed reaction is sn-glycerol 3-phosphate + an acyl-CoA = a 1-acyl-sn-glycero-3-phosphate + CoA. It functions in the pathway phospholipid metabolism; CDP-diacylglycerol biosynthesis; CDP-diacylglycerol from sn-glycerol 3-phosphate: step 1/3. This is Glycerol-3-phosphate acyltransferase from Photorhabdus laumondii subsp. laumondii (strain DSM 15139 / CIP 105565 / TT01) (Photorhabdus luminescens subsp. laumondii).